Reading from the N-terminus, the 407-residue chain is Phosphopentomutase (407 aa).

Positions 10, 306, 311, 347, 348, and 359 each coordinate Mn(2+).

This sequence belongs to the phosphopentomutase family. Requires Mn(2+) as cofactor.

It is found in the cytoplasm. It carries out the reaction 2-deoxy-alpha-D-ribose 1-phosphate = 2-deoxy-D-ribose 5-phosphate. The enzyme catalyses alpha-D-ribose 1-phosphate = D-ribose 5-phosphate. The protein operates within carbohydrate degradation; 2-deoxy-D-ribose 1-phosphate degradation; D-glyceraldehyde 3-phosphate and acetaldehyde from 2-deoxy-alpha-D-ribose 1-phosphate: step 1/2. Isomerase that catalyzes the conversion of deoxy-ribose 1-phosphate (dRib-1-P) and ribose 1-phosphate (Rib-1-P) to deoxy-ribose 5-phosphate (dRib-5-P) and ribose 5-phosphate (Rib-5-P), respectively. The sequence is that of Phosphopentomutase from Escherichia coli (strain UTI89 / UPEC).